A 394-amino-acid chain; its full sequence is Protein TsgA homolog (394 aa).

The next 12 membrane-spanning stretches (helical) occupy residues 11–31, 51–71, 76–96, 101–121, 134–154, 160–180, 206–226, 246–266, 274–294, 297–317, 334–354, and 363–383; these read WISF…GMVM, FLNT…EIIP, LVFG…GHNL, ACMF…TFLI, LLFT…IAAT, VAWY…FILT, IGVL…LGFI, GLVS…SVAL, IVTV…SSQQ, MLSM…TTLI, FILT…GPIV, and LATA…LGFV.

It belongs to the major facilitator superfamily. TsgA family.

The protein localises to the cell inner membrane. This chain is Protein TsgA homolog, found in Edwardsiella ictaluri (strain 93-146).